The following is a 101-amino-acid chain: NAD(P)H-quinone oxidoreductase subunit 4L, chloroplastic (101 aa).

The next 3 membrane-spanning stretches (helical) occupy residues 2 to 22 (MLEH…YGLI), 32 to 52 (MCLE…SDFF), and 61 to 81 (IFSI…LAIV).

The protein belongs to the complex I subunit 4L family. NDH is composed of at least 16 different subunits, 5 of which are encoded in the nucleus.

Its subcellular location is the plastid. It localises to the chloroplast thylakoid membrane. The enzyme catalyses a plastoquinone + NADH + (n+1) H(+)(in) = a plastoquinol + NAD(+) + n H(+)(out). It catalyses the reaction a plastoquinone + NADPH + (n+1) H(+)(in) = a plastoquinol + NADP(+) + n H(+)(out). Its function is as follows. NDH shuttles electrons from NAD(P)H:plastoquinone, via FMN and iron-sulfur (Fe-S) centers, to quinones in the photosynthetic chain and possibly in a chloroplast respiratory chain. The immediate electron acceptor for the enzyme in this species is believed to be plastoquinone. Couples the redox reaction to proton translocation, and thus conserves the redox energy in a proton gradient. The protein is NAD(P)H-quinone oxidoreductase subunit 4L, chloroplastic of Cicer arietinum (Chickpea).